Consider the following 730-residue polypeptide: Trimethylamine dehydrogenase (730 aa).

4 residues coordinate FMN: Pro-29, Cys-31, Tyr-61, and Glu-104. Cys-31 bears the S-6-FMN cysteine mark. 170–173 (YGAH) is a substrate binding site. Tyr-175 functions as the Proton donor in the catalytic mechanism. Residues Arg-223, Asp-268, Arg-300, Ala-322, and Arg-323 each coordinate FMN. [4Fe-4S] cluster contacts are provided by Cys-346, Cys-349, Cys-352, and Cys-365. Residues Ser-401, Asp-420, Thr-421, His-428, Met-471, and Asp-675 each coordinate ADP.

It in the N-terminal section; belongs to the NADH:flavin oxidoreductase/NADH oxidase family. As to quaternary structure, homodimer. Forms a ternary complex with the heterodimeric electron transfer flavoprotein. It depends on FMN as a cofactor. [4Fe-4S] cluster serves as cofactor.

It catalyses the reaction trimethylamine + oxidized [electron-transfer flavoprotein] + H2O + H(+) = dimethylamine + reduced [electron-transfer flavoprotein] + formaldehyde. The protein is Trimethylamine dehydrogenase of Methylophilus methylotrophus (Bacterium W3A1).